The chain runs to 99 residues: HssA/B-like protein 41 (99 aa).

Residues 1 to 29 (MTLFSSISSISNPMTSSKSSISSFGSGTS) are disordered.

The protein belongs to the hssA/B family.

The protein is HssA/B-like protein 41 (hssl41) of Dictyostelium discoideum (Social amoeba).